We begin with the raw amino-acid sequence, 470 residues long: Acetyl-CoA decarbonylase/synthase complex subunit beta 2 (470 aa).

[Ni-Fe-S] cluster-binding residues include Cys189, Cys192, Cys278, and Cys280.

This sequence belongs to the CdhC family. In terms of assembly, monomer. The ACDS complex is made up of alpha, epsilon, beta, gamma and delta chains with a probable stoichiometry of (alpha(2)epsilon(2))(4)-beta(8)-(gamma(1)delta(1))(8) (Potential). [Ni-Fe-S] cluster serves as cofactor.

The enzyme catalyses Co(I)-[corrinoid Fe-S protein] + acetyl-CoA + H(+) = methyl-Co(III)-[corrinoid Fe-S protein] + CO + CoA. The protein operates within one-carbon metabolism; methanogenesis from acetate. Functionally, part of a complex that catalyzes the reversible cleavage of acetyl-CoA, allowing growth on acetate as sole source of carbon and energy. The alpha-epsilon complex generates CO from CO(2), while the beta subunit (this protein) combines the CO with CoA and a methyl group to form acetyl-CoA. The methyl group, which is incorporated into acetyl-CoA, is transferred to the beta subunit by a corrinoid iron-sulfur protein (the gamma-delta complex). In Methanosarcina acetivorans (strain ATCC 35395 / DSM 2834 / JCM 12185 / C2A), this protein is Acetyl-CoA decarbonylase/synthase complex subunit beta 2 (cdhC2).